The chain runs to 1402 residues: Roundabout homolog 3 (1402 aa).

A signal peptide spans 1–20; sequence MLRYLLKTLLQMNLFADSLA. At 21–891 the chain is on the extracellular side; sequence RDISNSSELL…ERLAKVLRKP (871 aa). Residues Asn25, Asn34, and Asn53 are each glycosylated (N-linked (GlcNAc...) asparagine). Ig-like C2-type domains are found at residues 64 to 160, 166 to 253, 258 to 342, 347 to 440, and 450 to 531; these read PRIV…ASLE, DDFR…AELV, PSFL…GSLS, PQFV…ALLE, and PPII…GEAT. Cys85 and Cys143 are oxidised to a cystine. Asn156 carries an N-linked (GlcNAc...) asparagine glycan. 2 disulfides stabilise this stretch: Cys187-Cys236 and Cys279-Cys326. N-linked (GlcNAc...) asparagine glycans are attached at residues Asn355, Asn363, Asn410, Asn459, and Asn503. An intrachain disulfide couples Cys368 to Cys424. The cysteines at positions 472 and 521 are disulfide-linked. Disordered regions lie at residues 540-561 and 639-662; these read EDWGASPGPATGPSNPPGPPSQ and EPSPVSEPVQTQDSSLSRPAEDPW. Over residues 543–552 the composition is skewed to low complexity; sequence GASPGPATGP. 3 Fibronectin type-III domains span residues 558-652, 672-766, and 771-869; these read PPSQ…TQDS, AVRM…IPEE, and PPQG…FPPA. Positions 646 to 655 are enriched in polar residues; sequence PVQTQDSSLS. Asn784, Asn813, and Asn820 each carry an N-linked (GlcNAc...) asparagine glycan. The helical transmembrane segment at 892–912 threads the bilayer; that stretch reads AFLAGSSAACGALLLGFCAAL. Topologically, residues 913–1402 are cytoplasmic; that stretch reads YRRQKQRKEL…PGRNRREEPR (490 aa). 3 disordered regions span residues 965–989, 1032–1307, and 1340–1402; these read SWPHPPRSPSAQEPRGSCCPSNPDP, FHGG…VVQA, and GRPS…EEPR. Composition is skewed to polar residues over residues 1038–1049 and 1142–1152; these read QHSSGDPSTWSQ and PSPTSSYGQQS. A compositionally biased stretch (pro residues) spans 1158 to 1169; sequence PSPPDPPQPPTD. Low complexity-rich tracts occupy residues 1178–1191 and 1215–1228; these read RRVPLGPSSPLSVS and ASPSPVPSTASSAP. Positions 1243-1254 are enriched in basic residues; the sequence is HGHRARIRKKPK. A Phosphoserine modification is found at Ser1263. Residues 1294 to 1304 are compositionally biased toward basic and acidic residues; it reads LERERSGERRV. The span at 1346–1357 shows a compositional bias: polar residues; sequence SHGQGTSTCSTA. Positions 1358 to 1371 are enriched in low complexity; that stretch reads GSNSSRGSNSSRGS.

It belongs to the immunoglobulin superfamily. ROBO family. In terms of assembly, interacts (via Fibronectin type-III 1 domain) with NELL2 (via the EGF domains) with a 3:3 stoichiometry; this interaction promotes oligomerization of ROBO3 resulting in the repulsion of commissural axons in the midline. As to expression, detected in embryonal spinal cord and hindbrain.

It is found in the membrane. Receptor involved in axon guidance during development. Acts as a multifunctional regulator of pathfinding that simultaneously mediates NELL2 repulsion, inhibits SLIT repulsion, and facilitates Netrin-1/NTN1 attraction. In spinal cord development plays a role in guiding commissural axons probably by preventing premature sensitivity to Slit proteins thus inhibiting Slit signaling through ROBO1/ROBO2. Binding OF NELL2 to the receptor ROBO3 promotes oligomerization of ROBO3, resulting in the repulsion of commissural axons in the midline. ROBO3 also indirectly boosts axon attraction to NTN1 without interacting with NTN1 itself. Functionally, mediates NELL2 premature repulsion of commissural axons during midline crossing. In terms of biological role, after midline crossing by the commissural axons, may, in concert with ROBO1 and ROBO2, prevent midline recrossing. Does not mediate NELL2 signaling. The sequence is that of Roundabout homolog 3 from Mus musculus (Mouse).